The primary structure comprises 164 residues: MNREPMSMHGYNKICAELKQLKEVERPNIVKEIDIARGHGDLKENAEYHAAKEKQRFIEARIVDLSEIISNAQVIDPGALMHNKVSFGSTIKILNLDNDKEFSYTIVGSVESDPAKGLISFGSPIAKSLIGKSKGDVASIQLPNGESDFEILDIYYKEICFDEN.

This sequence belongs to the GreA/GreB family.

Its function is as follows. Necessary for efficient RNA polymerase transcription elongation past template-encoded arresting sites. The arresting sites in DNA have the property of trapping a certain fraction of elongating RNA polymerases that pass through, resulting in locked ternary complexes. Cleavage of the nascent transcript by cleavage factors such as GreA or GreB allows the resumption of elongation from the new 3'terminus. GreA releases sequences of 2 to 3 nucleotides. The chain is Transcription elongation factor GreA from Helicobacter acinonychis (strain Sheeba).